The following is an 884-amino-acid chain: Protein translocase subunit SecA (884 aa).

Residues glutamine 83, glycine 101–threonine 105, and aspartate 491 each bind ATP.

It belongs to the SecA family.

It localises to the plastid. Its subcellular location is the chloroplast stroma. It is found in the chloroplast thylakoid membrane. The enzyme catalyses ATP + H2O + cellular proteinSide 1 = ADP + phosphate + cellular proteinSide 2.. In terms of biological role, has a central role in coupling the hydrolysis of ATP to the transfer of proteins across the thylakoid membrane. This is Protein translocase subunit SecA from Porphyra purpurea (Red seaweed).